Consider the following 181-residue polypeptide: Probable chemoreceptor glutamine deamidase CheD (181 aa).

This sequence belongs to the CheD family.

The catalysed reaction is L-glutaminyl-[protein] + H2O = L-glutamyl-[protein] + NH4(+). Probably deamidates glutamine residues to glutamate on methyl-accepting chemotaxis receptors (MCPs), playing an important role in chemotaxis. The sequence is that of Probable chemoreceptor glutamine deamidase CheD from Agrobacterium fabrum (strain C58 / ATCC 33970) (Agrobacterium tumefaciens (strain C58)).